We begin with the raw amino-acid sequence, 50 residues long: Large ribosomal subunit protein eL39 (50 aa).

The span at 1–12 (MGKKSKASKKRL) shows a compositional bias: basic residues. Disordered regions lie at residues 1–20 (MGKK…RQNS) and 30–50 (TNRD…DTDE).

This sequence belongs to the eukaryotic ribosomal protein eL39 family.

The polypeptide is Large ribosomal subunit protein eL39 (rpl39e) (Halobacterium salinarum (strain ATCC 700922 / JCM 11081 / NRC-1) (Halobacterium halobium)).